The primary structure comprises 147 residues: Sec-independent protein translocase protein TatB (147 aa).

The helical transmembrane segment at Phe-2 to Gly-22 threads the bilayer. The tract at residues Glu-68–Gly-147 is disordered. Polar residues predominate over residues Gly-71–Tyr-97. Residues Pro-112–Pro-133 show a composition bias toward low complexity.

This sequence belongs to the TatB family. In terms of assembly, the Tat system comprises two distinct complexes: a TatABC complex, containing multiple copies of TatA, TatB and TatC subunits, and a separate TatA complex, containing only TatA subunits. Substrates initially bind to the TatABC complex, which probably triggers association of the separate TatA complex to form the active translocon.

It is found in the cell inner membrane. Part of the twin-arginine translocation (Tat) system that transports large folded proteins containing a characteristic twin-arginine motif in their signal peptide across membranes. Together with TatC, TatB is part of a receptor directly interacting with Tat signal peptides. TatB may form an oligomeric binding site that transiently accommodates folded Tat precursor proteins before their translocation. This chain is Sec-independent protein translocase protein TatB, found in Shewanella sp. (strain MR-4).